The primary structure comprises 131 residues: Small ribosomal subunit protein uS9c (131 aa).

It belongs to the universal ribosomal protein uS9 family.

The protein localises to the plastid. It is found in the chloroplast. The polypeptide is Small ribosomal subunit protein uS9c (rps9) (Emiliania huxleyi (Coccolithophore)).